The sequence spans 20 residues: Ribosome-inactivating protein (20 aa).

The interval 1 to 20 is disordered; the sequence is NVRFDLSGATSSSYKTFIKN. The segment covering 8–20 has biased composition (polar residues); it reads GATSSSYKTFIKN.

Belongs to the ribosome-inactivating protein family. Type 1 RIP subfamily.

It catalyses the reaction Endohydrolysis of the N-glycosidic bond at one specific adenosine on the 28S rRNA.. The chain is Ribosome-inactivating protein from Cucurbita pepo (Vegetable marrow).